The chain runs to 200 residues: Serine/threonine-protein kinase mos (200 aa).

In terms of domain architecture, Protein kinase spans 2–200 (LCLLQPLGSG…ELLKGERVTA (199 aa)). ATP contacts are provided by residues 8 to 16 (LGSGGFGSV) and lysine 29. The Proton acceptor role is filled by aspartate 143.

Belongs to the protein kinase superfamily. Ser/Thr protein kinase family.

The enzyme catalyses L-seryl-[protein] + ATP = O-phospho-L-seryl-[protein] + ADP + H(+). It catalyses the reaction L-threonyl-[protein] + ATP = O-phospho-L-threonyl-[protein] + ADP + H(+). This is Serine/threonine-protein kinase mos (MOS) from Ciconia nigra (Black stork).